We begin with the raw amino-acid sequence, 182 residues long: Hypoxanthine/guanine phosphoribosyltransferase (182 aa).

The protein belongs to the purine/pyrimidine phosphoribosyltransferase family. Archaeal HPRT subfamily. As to quaternary structure, homodimer.

It is found in the cytoplasm. The catalysed reaction is IMP + diphosphate = hypoxanthine + 5-phospho-alpha-D-ribose 1-diphosphate. It catalyses the reaction GMP + diphosphate = guanine + 5-phospho-alpha-D-ribose 1-diphosphate. It functions in the pathway purine metabolism; IMP biosynthesis via salvage pathway; IMP from hypoxanthine: step 1/1. In terms of biological role, catalyzes a salvage reaction resulting in the formation of IMP that is energically less costly than de novo synthesis. In Methanosphaerula palustris (strain ATCC BAA-1556 / DSM 19958 / E1-9c), this protein is Hypoxanthine/guanine phosphoribosyltransferase.